The following is a 337-amino-acid chain: NADH-quinone oxidoreductase subunit H (337 aa).

Helical transmembrane passes span 9-29 (FAKI…FTYV), 77-97 (FLIA…VIPF), 110-130 (LLYI…AGWA), 154-174 (MGFA…SGIV), 181-201 (FWEW…ISGV), 229-249 (MAFA…SFLA), 274-294 (VPGI…YLWF), and 313-333 (VLIP…YGGV).

It belongs to the complex I subunit 1 family. As to quaternary structure, NDH-1 is composed of 14 different subunits. Subunits NuoA, H, J, K, L, M, N constitute the membrane sector of the complex.

The protein localises to the cell inner membrane. It catalyses the reaction a quinone + NADH + 5 H(+)(in) = a quinol + NAD(+) + 4 H(+)(out). NDH-1 shuttles electrons from NADH, via FMN and iron-sulfur (Fe-S) centers, to quinones in the respiratory chain. The immediate electron acceptor for the enzyme in this species is believed to be ubiquinone. Couples the redox reaction to proton translocation (for every two electrons transferred, four hydrogen ions are translocated across the cytoplasmic membrane), and thus conserves the redox energy in a proton gradient. This subunit may bind ubiquinone. This is NADH-quinone oxidoreductase subunit H from Halorhodospira halophila (strain DSM 244 / SL1) (Ectothiorhodospira halophila (strain DSM 244 / SL1)).